The chain runs to 223 residues: Virulence transcriptional regulatory protein PhoP (223 aa).

The Response regulatory domain maps to 2–116 (RVLVVEDNAL…EVMARMQALM (115 aa)). Aspartate 51 carries the post-translational modification 4-aspartylphosphate. The ompR/PhoB-type DNA-binding region spans 124–222 (SQVISLPPFQ…VRGQGYLFEL (99 aa)).

In terms of processing, phosphorylated by PhoQ.

It localises to the cytoplasm. Its function is as follows. Member of the two-component regulatory system PhoQ/PhoP involved in virulence and adaptation to low Mg(2+) environments. Necessary for resistance to killing by polymorphonuclear leukocytes (PMNs) and cationic antimicrobial peptides (CAMP) they produce. This is Virulence transcriptional regulatory protein PhoP (phoP) from Shigella flexneri.